The chain runs to 279 residues: Probable flavonol synthase 4 (279 aa).

Positions 1 to 25 (MEVERDQHKPPLSLQNNKIPSSQNF) are disordered. Positions 13–25 (SLQNNKIPSSQNF) are enriched in polar residues. The Fe2OG dioxygenase domain maps to 156–256 (GAGYLMKINY…RMSSVVHIKP (101 aa)). 2-oxoglutarate is bound at residue 164–166 (NYY). Positions 181, 183, and 237 each coordinate Fe cation. Residue 247-249 (RMS) coordinates 2-oxoglutarate.

The protein belongs to the iron/ascorbate-dependent oxidoreductase family. Fe(2+) is required as a cofactor.

It carries out the reaction a (2R,3R)-dihydroflavonol + 2-oxoglutarate + O2 = a flavonol + succinate + CO2 + H2O. It functions in the pathway secondary metabolite biosynthesis; flavonoid biosynthesis. In Arabidopsis thaliana (Mouse-ear cress), this protein is Probable flavonol synthase 4 (FLS4).